We begin with the raw amino-acid sequence, 285 residues long: Urease accessory protein UreD 1 (285 aa).

This sequence belongs to the UreD family. In terms of assembly, ureD, UreF and UreG form a complex that acts as a GTP-hydrolysis-dependent molecular chaperone, activating the urease apoprotein by helping to assemble the nickel containing metallocenter of UreC. The UreE protein probably delivers the nickel.

Its subcellular location is the cytoplasm. Required for maturation of urease via the functional incorporation of the urease nickel metallocenter. In Pseudomonas syringae pv. tomato (strain ATCC BAA-871 / DC3000), this protein is Urease accessory protein UreD 1.